The sequence spans 146 residues: Large ribosomal subunit protein uL15 (146 aa).

Over residues 1 to 18 (MKLHELKPSEGSRKERNR) the composition is skewed to basic and acidic residues. The disordered stretch occupies residues 1 to 50 (MKLHELKPSEGSRKERNRVGRGTGSGNGKTSGRGHKGQKARSGGGVRLGF). The span at 21–31 (RGTGSGNGKTS) shows a compositional bias: gly residues.

This sequence belongs to the universal ribosomal protein uL15 family. As to quaternary structure, part of the 50S ribosomal subunit.

Its function is as follows. Binds to the 23S rRNA. This Listeria welshimeri serovar 6b (strain ATCC 35897 / DSM 20650 / CCUG 15529 / CIP 8149 / NCTC 11857 / SLCC 5334 / V8) protein is Large ribosomal subunit protein uL15.